The following is a 357-amino-acid chain: Protein-L-isoaspartate O-methyltransferase domain-containing protein 1 (357 aa).

Gly2 carries N-myristoyl glycine lipidation. Ser64 is an active-site residue. 3 adoMet binding motif regions span residues 85–94 (LNLGSGTGYL), 160–164 (YDRIY), and 181–191 (LKVGGILVMPI). Positions 240 to 250 (VRNLQDLARIY) are BC-box. Residues 299–331 (PLDSEEDEKMEEDSKEEEEKEHIEAMKREEPPQ) are disordered. A compositionally biased stretch (acidic residues) spans 301–317 (DSEEDEKMEEDSKEEEE). Positions 318–331 (KEHIEAMKREEPPQ) are enriched in basic and acidic residues. The segment at 341–344 (LPLP) is CUL-box.

It belongs to the methyltransferase superfamily. L-isoaspartyl/D-aspartyl protein methyltransferase family. As to quaternary structure, component of the probable ECS(PCMTD1) E3 ubiquitin-protein ligase complex, at least composed of CUL5, ELOB, ELOC, RBX2 and PCMTD1. Interacts (via the BC-box) with ELOB and ELOC; the interaction is direct and stabilizes PCMTD1.

It is found in the cytoplasm. The protein localises to the membrane. Functionally, substrate recognition component of an ECS (Elongin BC-CUL5-SOCS-box protein) E3 ubiquitin ligase complex which mediates the ubiquitination and subsequent proteasomal degradation of target proteins. Specifically binds to the methyltransferase cofactor S-adenosylmethionine (AdoMet) via the N-terminal AdoMet binding motif, but does not display methyltransferase activity. May provide an alternate maintenance pathway for modified proteins by acting as a damage-specific E3 ubiquitin ligase adaptor protein. The protein is Protein-L-isoaspartate O-methyltransferase domain-containing protein 1 (Pcmtd1) of Mus musculus (Mouse).